Consider the following 671-residue polypeptide: Phenol 2-monooxygenase (671 aa).

FAD-binding positions include 10 to 43 (DVLI…RIFD) and 295 to 305 (LQEGRVFLAGD).

It belongs to the PheA/TfdB FAD monooxygenase family. Requires FAD as cofactor.

Its subcellular location is the cytoplasm. The enzyme catalyses phenol + NADPH + O2 + H(+) = catechol + NADP(+) + H2O. The protein operates within aromatic compound metabolism; phenol degradation. Functionally, hydroxylates phenol to catechol. Also acts on cresols. This Ralstonia pickettii (Burkholderia pickettii) protein is Phenol 2-monooxygenase (tbuD).